The primary structure comprises 274 residues: Nitrogenase iron protein (274 aa).

8-15 is a binding site for ATP; sequence GKGGIGKS. Residue C94 participates in [4Fe-4S] cluster binding. R97 is modified (ADP-ribosylarginine; by dinitrogenase reductase ADP-ribosyltransferase). C131 serves as a coordination point for [4Fe-4S] cluster.

The protein belongs to the NifH/BchL/ChlL family. Homodimer. [4Fe-4S] cluster is required as a cofactor. In terms of processing, the reversible ADP-ribosylation of Arg-97 inactivates the nitrogenase reductase and regulates nitrogenase activity.

It catalyses the reaction N2 + 8 reduced [2Fe-2S]-[ferredoxin] + 16 ATP + 16 H2O = H2 + 8 oxidized [2Fe-2S]-[ferredoxin] + 2 NH4(+) + 16 ADP + 16 phosphate + 6 H(+). Its function is as follows. The key enzymatic reactions in nitrogen fixation are catalyzed by the nitrogenase complex, which has 2 components: the iron protein and the molybdenum-iron protein. The chain is Nitrogenase iron protein from Solidesulfovibrio magneticus (strain ATCC 700980 / DSM 13731 / RS-1) (Desulfovibrio magneticus).